The primary structure comprises 307 residues: tRNA pseudouridine synthase B (307 aa).

Aspartate 47 functions as the Nucleophile in the catalytic mechanism.

Belongs to the pseudouridine synthase TruB family. Type 1 subfamily.

It carries out the reaction uridine(55) in tRNA = pseudouridine(55) in tRNA. Functionally, responsible for synthesis of pseudouridine from uracil-55 in the psi GC loop of transfer RNAs. This chain is tRNA pseudouridine synthase B, found in Chromohalobacter salexigens (strain ATCC BAA-138 / DSM 3043 / CIP 106854 / NCIMB 13768 / 1H11).